Reading from the N-terminus, the 166-residue chain is Putative 4-hydroxy-4-methyl-2-oxoglutarate aldolase (166 aa).

Residues 74–77 and arginine 96 contribute to the substrate site; that span reads GDQI. Position 97 (aspartate 97) interacts with a divalent metal cation.

The protein belongs to the class II aldolase/RraA-like family. In terms of assembly, homotrimer. A divalent metal cation is required as a cofactor.

It carries out the reaction 4-hydroxy-4-methyl-2-oxoglutarate = 2 pyruvate. The catalysed reaction is oxaloacetate + H(+) = pyruvate + CO2. In terms of biological role, catalyzes the aldol cleavage of 4-hydroxy-4-methyl-2-oxoglutarate (HMG) into 2 molecules of pyruvate. Also contains a secondary oxaloacetate (OAA) decarboxylase activity due to the common pyruvate enolate transition state formed following C-C bond cleavage in the retro-aldol and decarboxylation reactions. The polypeptide is Putative 4-hydroxy-4-methyl-2-oxoglutarate aldolase (Xanthomonas campestris pv. campestris (strain B100)).